The sequence spans 487 residues: Cysteine--tRNA ligase (487 aa).

Cys-29 serves as a coordination point for Zn(2+). The short motif at 31 to 41 is the 'HIGH' region element; that stretch reads VTVYDVNHVGH. Cys-209, His-234, and Glu-238 together coordinate Zn(2+). Positions 266–270 match the 'KMSKS' region motif; that stretch reads KMSKS. Lys-269 contacts ATP.

This sequence belongs to the class-I aminoacyl-tRNA synthetase family. In terms of assembly, monomer. Zn(2+) serves as cofactor.

The protein resides in the cytoplasm. The catalysed reaction is tRNA(Cys) + L-cysteine + ATP = L-cysteinyl-tRNA(Cys) + AMP + diphosphate. This is Cysteine--tRNA ligase from Persephonella marina (strain DSM 14350 / EX-H1).